A 264-amino-acid polypeptide reads, in one-letter code: Thymidylate synthase (264 aa).

Residue arginine 21 coordinates dUMP. Histidine 51 is a binding site for (6R)-5,10-methylene-5,6,7,8-tetrahydrofolate. 126–127 (RR) contributes to the dUMP binding site. The Nucleophile role is filled by cysteine 146. Residues 166-169 (RSCD), asparagine 177, and 207-209 (HLY) each bind dUMP. Aspartate 169 contacts (6R)-5,10-methylene-5,6,7,8-tetrahydrofolate. Residue alanine 263 participates in (6R)-5,10-methylene-5,6,7,8-tetrahydrofolate binding.

The protein belongs to the thymidylate synthase family. Bacterial-type ThyA subfamily. Homodimer.

It localises to the cytoplasm. It carries out the reaction dUMP + (6R)-5,10-methylene-5,6,7,8-tetrahydrofolate = 7,8-dihydrofolate + dTMP. The protein operates within pyrimidine metabolism; dTTP biosynthesis. In terms of biological role, catalyzes the reductive methylation of 2'-deoxyuridine-5'-monophosphate (dUMP) to 2'-deoxythymidine-5'-monophosphate (dTMP) while utilizing 5,10-methylenetetrahydrofolate (mTHF) as the methyl donor and reductant in the reaction, yielding dihydrofolate (DHF) as a by-product. This enzymatic reaction provides an intracellular de novo source of dTMP, an essential precursor for DNA biosynthesis. The polypeptide is Thymidylate synthase (Escherichia coli O9:H4 (strain HS)).